A 201-amino-acid polypeptide reads, in one-letter code: Holliday junction branch migration complex subunit RuvA (201 aa).

The domain I stretch occupies residues 1–64 (MIGRLRGTLA…EDAHLLYGFA (64 aa)). Positions 65–143 (EKRERELFRE…AWENMPTIAP (79 aa)) are domain II. Positions 144–152 (LVMEPRASA) are flexible linker. The domain III stretch occupies residues 153-201 (TVSSAEADAVSALIALGFKPQEASRAVAAVPGEDLSSEEMIRQALKGMV).

It belongs to the RuvA family. Homotetramer. Forms an RuvA(8)-RuvB(12)-Holliday junction (HJ) complex. HJ DNA is sandwiched between 2 RuvA tetramers; dsDNA enters through RuvA and exits via RuvB. An RuvB hexamer assembles on each DNA strand where it exits the tetramer. Each RuvB hexamer is contacted by two RuvA subunits (via domain III) on 2 adjacent RuvB subunits; this complex drives branch migration. In the full resolvosome a probable DNA-RuvA(4)-RuvB(12)-RuvC(2) complex forms which resolves the HJ.

It is found in the cytoplasm. In terms of biological role, the RuvA-RuvB-RuvC complex processes Holliday junction (HJ) DNA during genetic recombination and DNA repair, while the RuvA-RuvB complex plays an important role in the rescue of blocked DNA replication forks via replication fork reversal (RFR). RuvA specifically binds to HJ cruciform DNA, conferring on it an open structure. The RuvB hexamer acts as an ATP-dependent pump, pulling dsDNA into and through the RuvAB complex. HJ branch migration allows RuvC to scan DNA until it finds its consensus sequence, where it cleaves and resolves the cruciform DNA. This Pseudomonas aeruginosa (strain LESB58) protein is Holliday junction branch migration complex subunit RuvA.